A 215-amino-acid polypeptide reads, in one-letter code: 3-demethoxyubiquinol 3-hydroxylase (215 aa).

E64, E94, H97, E146, E178, and H181 together coordinate Fe cation.

This sequence belongs to the COQ7 family. Fe cation is required as a cofactor.

The protein resides in the cell membrane. It carries out the reaction a 5-methoxy-2-methyl-3-(all-trans-polyprenyl)benzene-1,4-diol + AH2 + O2 = a 3-demethylubiquinol + A + H2O. The protein operates within cofactor biosynthesis; ubiquinone biosynthesis. Its function is as follows. Catalyzes the hydroxylation of 2-nonaprenyl-3-methyl-6-methoxy-1,4-benzoquinol during ubiquinone biosynthesis. In Coxiella burnetii (strain Dugway 5J108-111), this protein is 3-demethoxyubiquinol 3-hydroxylase.